The sequence spans 96 residues: Muconolactone Delta-isomerase 1 (96 aa).

This sequence belongs to the muconolactone Delta-isomerase family. Homodecamer.

It catalyses the reaction (S)-muconolactone = (4,5-dihydro-5-oxofuran-2-yl)-acetate. Its pathway is aromatic compound metabolism; beta-ketoadipate pathway; 5-oxo-4,5-dihydro-2-furylacetate from catechol: step 3/3. This chain is Muconolactone Delta-isomerase 1 (catC1), found in Acinetobacter lwoffii.